The sequence spans 164 residues: Ubiquitin-conjugating enzyme E2 2 (164 aa).

The 147-residue stretch at 4–150 folds into the UBC core domain; it reads PARRRLMRDF…VKETVEKSWE (147 aa). The active-site Glycyl thioester intermediate is the Cys-88.

Belongs to the ubiquitin-conjugating enzyme family.

It is found in the cytoplasm. Its subcellular location is the nucleus. It catalyses the reaction S-ubiquitinyl-[E1 ubiquitin-activating enzyme]-L-cysteine + [E2 ubiquitin-conjugating enzyme]-L-cysteine = [E1 ubiquitin-activating enzyme]-L-cysteine + S-ubiquitinyl-[E2 ubiquitin-conjugating enzyme]-L-cysteine.. It functions in the pathway protein modification; protein ubiquitination. In terms of biological role, catalyzes the covalent attachment of ubiquitin to other proteins. Plays a role in transcription regulation by catalyzing the monoubiquitination of histone H2B to form H2BK123ub1. H2BK123ub1 gives a specific tag for epigenetic transcriptional activation and is also a prerequisite for H3K4me and H3K79me formation. Also involved in postreplication repair of UV-damaged DNA, in N-end rule-dependent protein degradation and in sporulation. This is Ubiquitin-conjugating enzyme E2 2 (UBC2) from Kluyveromyces lactis (strain ATCC 8585 / CBS 2359 / DSM 70799 / NBRC 1267 / NRRL Y-1140 / WM37) (Yeast).